The sequence spans 176 residues: Inner membrane-spanning protein YciB (176 aa).

Transmembrane regions (helical) follow at residues 23–43 (MIAAAAVALVAGVVQAAFLYW), 50–70 (TMQWVGLVLIVVFGGATIVLG), 74–94 (FIMWKPTVLFWCGALFLLGSH), 119–139 (LTYMWVGFLIFMGIANWFVFT), and 150–170 (MFGSTALMLFFFIIQGIYLST).

Belongs to the YciB family.

It localises to the cell inner membrane. Its function is as follows. Plays a role in cell envelope biogenesis, maintenance of cell envelope integrity and membrane homeostasis. The sequence is that of Inner membrane-spanning protein YciB from Neisseria gonorrhoeae (strain ATCC 700825 / FA 1090).